The sequence spans 196 residues: UPF0134 protein MPN_501 (196 aa).

The protein belongs to the UPF0134 family.

This chain is UPF0134 protein MPN_501, found in Mycoplasma pneumoniae (strain ATCC 29342 / M129 / Subtype 1) (Mycoplasmoides pneumoniae).